The chain runs to 317 residues: MPVQGSQRSLLGAVNSTPTATPHLRPAANQTGPQCLEVSIPDGLFLCLGLVSLVENTLVVAAIAKNRNLHSPMYCFICCLALSDLLVSVSSVLETAVLLLLGAGALAAQATVVQQLGNVIDVLLCSSMVSSLFFLGAIAMDRYISIFYALRYHSIVTLARARRAIAAIWAASILSSTLFIAYCDRTAALLCLVVFFLAMLVLMAVLYVHMLTQARQHAQGIARLHKRQRPVQQGWGLKGAATLTILLGVFFLCWGPFFLHLTLIAVCPQHPTCSCIFKNFRLFLALIVCNAIVDPLIYAFRSQELRKTLKEVLLFFW.

Positions 1–20 are enriched in polar residues; it reads MPVQGSQRSLLGAVNSTPTA. The tract at residues 1-23 is disordered; it reads MPVQGSQRSLLGAVNSTPTATPH. The Extracellular segment spans residues 1–37; it reads MPVQGSQRSLLGAVNSTPTATPHLRPAANQTGPQCLE. Residue Asn-29 is glycosylated (N-linked (GlcNAc...) asparagine). The helical transmembrane segment at 38 to 63 threads the bilayer; that stretch reads VSIPDGLFLCLGLVSLVENTLVVAAI. The Cytoplasmic segment spans residues 64–72; the sequence is AKNRNLHSP. Residues 73–93 traverse the membrane as a helical segment; that stretch reads MYCFICCLALSDLLVSVSSVL. Over 94-118 the chain is Extracellular; sequence ETAVLLLLGAGALAAQATVVQQLGN. A helical membrane pass occupies residues 119–140; that stretch reads VIDVLLCSSMVSSLFFLGAIAM. Topologically, residues 141–163 are cytoplasmic; that stretch reads DRYISIFYALRYHSIVTLARARR. Residues 164–183 traverse the membrane as a helical segment; that stretch reads AIAAIWAASILSSTLFIAYC. The Extracellular segment spans residues 184–191; that stretch reads DRTAALLC. Residues 192–211 traverse the membrane as a helical segment; it reads LVVFFLAMLVLMAVLYVHML. Residues 212 to 240 are Cytoplasmic-facing; that stretch reads TQARQHAQGIARLHKRQRPVQQGWGLKGA. The chain crosses the membrane as a helical span at residues 241–266; the sequence is ATLTILLGVFFLCWGPFFLHLTLIAV. The Extracellular portion of the chain corresponds to 267–279; it reads CPQHPTCSCIFKN. The helical transmembrane segment at 280 to 300 threads the bilayer; sequence FRLFLALIVCNAIVDPLIYAF. Topologically, residues 301-317 are cytoplasmic; the sequence is RSQELRKTLKEVLLFFW.

The protein belongs to the G-protein coupled receptor 1 family. Interacts with MGRN1, but does not undergo MGRN1-mediated ubiquitination; this interaction competes with GNAS-binding and thus inhibits agonist-induced cAMP production. Interacts with OPN3; the interaction results in a decrease in MC1R-mediated cAMP signaling and ultimately a decrease in melanin production in melanocytes.

It is found in the cell membrane. In terms of biological role, receptor for MSH (alpha, beta and gamma) and ACTH. The activity of this receptor is mediated by G proteins which activate adenylate cyclase. Mediates melanogenesis, the production of eumelanin (black/brown) and phaeomelanin (red/yellow), via regulation of cAMP signaling in melanocytes. The polypeptide is Melanocyte-stimulating hormone receptor (MC1R) (Lemur catta (Ring-tailed lemur)).